Reading from the N-terminus, the 439-residue chain is S-layer protein (439 aa).

Positions 1-30 (MKKNLRIVSAAAAALLAVAPIAATAMPVNA) are cleaved as a signal peptide.

Glycosylated.

It is found in the secreted. The protein resides in the cell wall. The protein localises to the S-layer. Its function is as follows. The S-layer is a paracrystalline mono-layered assembly of proteins which coat the surface of bacteria. This chain is S-layer protein (slpH), found in Lactobacillus helveticus (Lactobacillus suntoryeus).